The primary structure comprises 145 residues: Hemoglobin subunit beta (145 aa).

In terms of domain architecture, Globin spans 1–145 (MLTAEEKAAV…VANALAHRYH (145 aa)). Threonine 11 is modified (phosphothreonine). N6-acetyllysine is present on lysine 58. Histidine 62 lines the heme b pocket. Lysine 81 carries the post-translational modification N6-acetyllysine. Position 91 (histidine 91) interacts with heme b. Cysteine 92 carries the post-translational modification S-nitrosocysteine.

Belongs to the globin family. Heterotetramer of two alpha chains and two beta chains. As to expression, red blood cells.

In terms of biological role, involved in oxygen transport from the lung to the various peripheral tissues. This Ovis aries musimon (Mouflon) protein is Hemoglobin subunit beta (HBB).